Here is a 420-residue protein sequence, read N- to C-terminus: 3-phosphoshikimate 1-carboxyvinyltransferase (420 aa).

Residues K26, S27, and R31 each contribute to the 3-phosphoshikimate site. K26 is a binding site for phosphoenolpyruvate. Positions 97 and 125 each coordinate phosphoenolpyruvate. Residues S170, S171, Q172, D297, N320, and K324 each contribute to the 3-phosphoshikimate site. Residue Q172 participates in phosphoenolpyruvate binding. D297 (proton acceptor) is an active-site residue. Phosphoenolpyruvate-binding residues include R328, R375, and K400.

The protein belongs to the EPSP synthase family. As to quaternary structure, monomer.

It localises to the cytoplasm. It carries out the reaction 3-phosphoshikimate + phosphoenolpyruvate = 5-O-(1-carboxyvinyl)-3-phosphoshikimate + phosphate. Its pathway is metabolic intermediate biosynthesis; chorismate biosynthesis; chorismate from D-erythrose 4-phosphate and phosphoenolpyruvate: step 6/7. Catalyzes the transfer of the enolpyruvyl moiety of phosphoenolpyruvate (PEP) to the 5-hydroxyl of shikimate-3-phosphate (S3P) to produce enolpyruvyl shikimate-3-phosphate and inorganic phosphate. This chain is 3-phosphoshikimate 1-carboxyvinyltransferase, found in Rhizobium etli (strain ATCC 51251 / DSM 11541 / JCM 21823 / NBRC 15573 / CFN 42).